The chain runs to 369 residues: 4-hydroxy-3-methylbut-2-en-1-yl diphosphate synthase (flavodoxin) (369 aa).

Residues cysteine 270, cysteine 273, cysteine 305, and glutamate 312 each coordinate [4Fe-4S] cluster.

It belongs to the IspG family. The cofactor is [4Fe-4S] cluster.

It catalyses the reaction (2E)-4-hydroxy-3-methylbut-2-enyl diphosphate + oxidized [flavodoxin] + H2O + 2 H(+) = 2-C-methyl-D-erythritol 2,4-cyclic diphosphate + reduced [flavodoxin]. Its pathway is isoprenoid biosynthesis; isopentenyl diphosphate biosynthesis via DXP pathway; isopentenyl diphosphate from 1-deoxy-D-xylulose 5-phosphate: step 5/6. In terms of biological role, converts 2C-methyl-D-erythritol 2,4-cyclodiphosphate (ME-2,4cPP) into 1-hydroxy-2-methyl-2-(E)-butenyl 4-diphosphate. The sequence is that of 4-hydroxy-3-methylbut-2-en-1-yl diphosphate synthase (flavodoxin) from Pseudomonas putida (strain ATCC 700007 / DSM 6899 / JCM 31910 / BCRC 17059 / LMG 24140 / F1).